A 480-amino-acid polypeptide reads, in one-letter code: Glutamyl-tRNA(Gln) amidotransferase subunit A (480 aa).

Residues Lys70 and Ser145 each act as charge relay system in the active site. Ser169 (acyl-ester intermediate) is an active-site residue.

The protein belongs to the amidase family. GatA subfamily. Heterotrimer of A, B and C subunits.

It carries out the reaction L-glutamyl-tRNA(Gln) + L-glutamine + ATP + H2O = L-glutaminyl-tRNA(Gln) + L-glutamate + ADP + phosphate + H(+). Its function is as follows. Allows the formation of correctly charged Gln-tRNA(Gln) through the transamidation of misacylated Glu-tRNA(Gln) in organisms which lack glutaminyl-tRNA synthetase. The reaction takes place in the presence of glutamine and ATP through an activated gamma-phospho-Glu-tRNA(Gln). This is Glutamyl-tRNA(Gln) amidotransferase subunit A from Lactobacillus delbrueckii subsp. bulgaricus (strain ATCC BAA-365 / Lb-18).